The sequence spans 733 residues: Two pore calcium channel protein 1 (733 aa).

Methionine 1 carries the post-translational modification N-acetylmethionine. Residues 1-71 (MEDPLIGRDS…RYYFIFTRLD (71 aa)) are Cytoplasmic-facing. The helical transmembrane segment at 72-92 (LIWSLNYFALLFLNFFEQPLW) threads the bilayer. The Vacuolar segment spans residues 93–120 (CEKNPKPSCKDRDYYYLGELPYLTNAES). Residues 121-141 (IIYEVITLAILLVHTFFPISY) form a helical membrane-spanning segment. Residues 142–158 (EGSRIFWTSRLNLVKVA) are Cytoplasmic-facing. The helical transmembrane segment at 159-179 (CVVILFVDVLVDFLYLSPLAF) threads the bilayer. Aspartate 180 is a topological domain (vacuolar). The chain crosses the membrane as a helical; Voltage-sensor span at residues 181-199 (FLPFRIAPYVRVIIFILSI). Residues 200–218 (RELRDTLVLLSGMLGTYLN) lie on the Cytoplasmic side of the membrane. A helical transmembrane segment spans residues 219–239 (ILALWMLFLLFASWIAFVMFE). At 240–245 (DTQQGL) the chain is on the vacuolar side. Residues 246-260 (TVFTSYGATLYQMFI) constitute an intramembrane region (pore-forming). Over 261–282 (LFTTSNNPDVWIPAYKSSRWSS) the chain is Vacuolar. Residues 283–303 (VFFVLYVLIGVYFVTNLILAV) traverse the membrane as a helical segment. At 304–428 (VYDSFKEQLA…LSQQLRAFVR (125 aa)) the chain is on the cytoplasmic side. EF-hand domains are found at residues 322–357 (MKRR…LTNY) and 363–398 (ISKE…IALR). The chain crosses the membrane as a helical span at residues 429–449 (SPNFGYAISFILIINFIAVVV). At 450 to 465 (ETTLDIEESSAQKPWQ) the chain is on the vacuolar side. Residues 466-486 (VAEFVFGWIYVLEMALKIYTY) traverse the membrane as a helical segment. Residues 487-498 (GFENYWREGANR) are Cytoplasmic-facing. Residues 499–519 (FDFLVTWVIVIGETATFITPD) form a helical membrane-spanning segment. Residues 520–528 (ENTFFSNGE) lie on the Vacuolar side of the membrane. Residues 529-546 (WIRYLLLARMLRLIRLLM) traverse the membrane as a helical; Voltage-sensor segment. Residues 547-557 (NVQRYRAFIAT) lie on the Cytoplasmic side of the membrane. A helical transmembrane segment spans residues 558-578 (FITLIPSLMPYLGTIFCVLCI). Topologically, residues 579–615 (YCSIGVQVFGGLVNAGNKKLFETELAEDDYLLFNFND) are vacuolar. Residues 616–630 (YPNGMVTLFNLLVMG) constitute an intramembrane region (pore-forming). Over 631–651 (NWQVWMESYKDLTGTWWSITY) the chain is Vacuolar. The helical transmembrane segment at 652–672 (FVSFYVITILLLLNLVVAFVL) threads the bilayer. At 673–733 (EAFFTELDLE…SKPECSTSDT (61 aa)) the chain is on the cytoplasmic side. The segment covering 686-695 (KCQGQDSQEK) has biased composition (basic and acidic residues). The interval 686-711 (KCQGQDSQEKRNRRRSAGSKSRSQRV) is disordered.

This sequence belongs to the calcium channel alpha-1 subunit (TC 1.A.1.11) family. Two pore calcium channel subfamily. Homodimer. Ubiquitously expressed.

The protein localises to the vacuole membrane. Inhibited by Al(3+). Functionally, functions as a voltage-gated inward-rectifying Ca(2+) channel (VDCC) across the vacuole membrane. Is one of the essential components of the slow vacuolar (SV) channel. Acts as the major ROS-responsive Ca(2+) channel and is the possible target of Al-dependent inhibition. Involved in the regulation of germination and stomatal movement. The chain is Two pore calcium channel protein 1 (TPC1) from Arabidopsis thaliana (Mouse-ear cress).